A 254-amino-acid chain; its full sequence is uncharacterized protein (254 aa).

This sequence belongs to the MtxX family.

This is an uncharacterized protein from Methanopyrus kandleri (strain AV19 / DSM 6324 / JCM 9639 / NBRC 100938).